Consider the following 655-residue polypeptide: Probable potassium transport system protein Kup (655 aa).

Helical transmembrane passes span 19–39 (GLLI…LYVM), 42–62 (IAGG…CVFW), 102–122 (VWPA…TPPI), 132–152 (LIFN…VMLF), 161–181 (IVGK…ATLG), 214–234 (SGFW…ALYS), 246–266 (ISWI…GAWI), 282–302 (IMPE…AIIA), 338–358 (LFIP…VLWF), 370–390 (LAIN…LLII), 395–415 (FIWV…FLVA), and 420–440 (FFHG…IMII).

Belongs to the HAK/KUP transporter (TC 2.A.72) family.

It is found in the cell inner membrane. The catalysed reaction is K(+)(in) + H(+)(in) = K(+)(out) + H(+)(out). Transport of potassium into the cell. Likely operates as a K(+):H(+) symporter. The chain is Probable potassium transport system protein Kup from Cytophaga hutchinsonii (strain ATCC 33406 / DSM 1761 / CIP 103989 / NBRC 15051 / NCIMB 9469 / D465).